Reading from the N-terminus, the 109-residue chain is Homeobox protein E30 (109 aa).

Basic residues predominate over residues glycine 1 to asparagine 12. Positions glycine 1–phenylalanine 27 are disordered. The homeobox DNA-binding region spans glutamate 20–serine 79.

Belongs to the engrailed homeobox family.

It is found in the nucleus. The polypeptide is Homeobox protein E30 (Apis mellifera (Honeybee)).